We begin with the raw amino-acid sequence, 188 residues long: Insulin-like growth factor 1 (188 aa).

A b region spans residues 45–73 (GPETLCGAELVDTLQFVCGERGFYFSKPT). Disulfide bonds link Cys-50–Cys-92, Cys-62–Cys-105, and Cys-91–Cys-96. Residues 74–85 (GYGPSSRRSHNR) form a c region. The tract at residues 86–106 (GIVDECCFQSCELRRLEMYCA) is a. The segment at 107 to 114 (PVKSGKAA) is d. Residues 115–188 (RSVRAQRHTD…GNTGGRNYRM (74 aa)) constitute a propeptide, e peptide. The segment at 115–188 (RSVRAQRHTD…GNTGGRNYRM (74 aa)) is disordered. Over residues 140–153 (RGTERRTAQHPDKT) the composition is skewed to basic and acidic residues.

This sequence belongs to the insulin family. In terms of tissue distribution, all the isoforms are expressed in embryos, juvenile and adult liver, muscle and brain. At least one isoform is expressed in heart, kidney, testes, ovary, adipose tissue and spleen of juvenile salmon.

It localises to the secreted. The insulin-like growth factors, isolated from plasma, are structurally and functionally related to insulin but have a much higher growth-promoting activity. Acts as a ligand for IGF1R. Binds to the alpha subunit of IGF1R, leading to the activation of the intrinsic tyrosine kinase activity which autophosphorylates tyrosine residues in the beta subunit thus initiatiating a cascade of down-stream signaling events leading to activation of the PI3K-AKT/PKB and the Ras-MAPK pathways. Binds to integrins. Its binding to integrins and subsequent ternary complex formation with integrins and IGFR1 are essential for IGF1 signaling. This is Insulin-like growth factor 1 from Oncorhynchus kisutch (Coho salmon).